Consider the following 368-residue polypeptide: Decarboxylase yanB (368 aa).

3 residues coordinate Zn(2+): histidine 7, histidine 9, and histidine 159. Asparagine 169 is a glycosylation site (N-linked (GlcNAc...) asparagine). A Zn(2+)-binding site is contributed by aspartate 283. Residues tryptophan 339–leucine 359 traverse the membrane as a helical segment.

Belongs to the metallo-dependent hydrolases superfamily. ACMSD family.

It is found in the membrane. The enzyme catalyses 6-methylsalicylate + H(+) = 3-methylphenol + CO2. It participates in secondary metabolite biosynthesis; terpenoid biosynthesis. In terms of biological role, decarboxylase; part of the gene cluster that mediates the biosynthesis of yanuthone D, a fungal isoprenoid epoxycyclohexenone that acts as an antibiotic against fungi and bacteria. The first step of the pathway is the synthesis of 6-methylsalicylic acid (6-MSA) by the polyketide synthase yanA. 6-MSA is then converted to m-cresol by the decarboxylase yanB. The cytochrome P450 monooxygenase yanC then catalyzes the oxidation of m-cresol to toluquinol. Epoxidation of toluquinol is then performed by the short chain dehydrogenase yanD, with the help of yanE, and a further prenylation by yanG leads to 7-deacetoxyyanuthone A. The next step is the hydroxylation of C-22 of 7-deacetoxyyanuthone A by the cytochrome P450 monooxygenase yanH to yield 22-deacetylyanuthone A. O-Mevalon transferase yanI then attaches mevalon to the hydroxyl group of 22-deacetylyanuthone A to produce yanuthone E. Finally, the FAD-dependent monooxygenase yanF oxidizes the hydroxyl group at C15 of yanuthone E to form yanuthone D. Furthermore, several branching points in the pathway lead to the production of yanuthones F and G from 7-deacetoxyyanuthone A; yanuthones H and I from 22-deacetylyanuthone A; and yanuthone J from yanuthone E. This is Decarboxylase yanB from Aspergillus niger (strain ATCC 1015 / CBS 113.46 / FGSC A1144 / LSHB Ac4 / NCTC 3858a / NRRL 328 / USDA 3528.7).